Consider the following 354-residue polypeptide: Aspartate carbamoyltransferase catalytic subunit (354 aa).

The carbamoyl phosphate site is built by Arg-67 and Thr-68. An L-aspartate-binding site is contributed by Lys-95. Carbamoyl phosphate is bound by residues Arg-117, His-150, and Gln-153. Positions 190 and 261 each coordinate L-aspartate. The carbamoyl phosphate site is built by Gly-302 and Pro-303.

The protein belongs to the aspartate/ornithine carbamoyltransferase superfamily. ATCase family. Heterododecamer (2C3:3R2) of six catalytic PyrB chains organized as two trimers (C3), and six regulatory PyrI chains organized as three dimers (R2).

It catalyses the reaction carbamoyl phosphate + L-aspartate = N-carbamoyl-L-aspartate + phosphate + H(+). Its pathway is pyrimidine metabolism; UMP biosynthesis via de novo pathway; (S)-dihydroorotate from bicarbonate: step 2/3. Its function is as follows. Catalyzes the condensation of carbamoyl phosphate and aspartate to form carbamoyl aspartate and inorganic phosphate, the committed step in the de novo pyrimidine nucleotide biosynthesis pathway. The sequence is that of Aspartate carbamoyltransferase catalytic subunit from Synechococcus sp. (strain RCC307).